Consider the following 436-residue polypeptide: 3-ketoacyl-CoA thiolase (436 aa).

The Acyl-thioester intermediate role is filled by Cys-99. Catalysis depends on proton acceptor residues His-392 and Cys-422.

Belongs to the thiolase-like superfamily. Thiolase family. In terms of assembly, heterotetramer of two alpha chains (FadJ) and two beta chains (FadI).

Its subcellular location is the cytoplasm. It carries out the reaction an acyl-CoA + acetyl-CoA = a 3-oxoacyl-CoA + CoA. The protein operates within lipid metabolism; fatty acid beta-oxidation. Its function is as follows. Catalyzes the final step of fatty acid oxidation in which acetyl-CoA is released and the CoA ester of a fatty acid two carbons shorter is formed. This is 3-ketoacyl-CoA thiolase from Shewanella baltica (strain OS155 / ATCC BAA-1091).